The chain runs to 466 residues: Ribulose bisphosphate carboxylase large chain (466 aa).

N6,N6,N6-trimethyllysine is present on K5. Substrate contacts are provided by N114 and T164. K166 acts as the Proton acceptor in catalysis. K168 lines the substrate pocket. Residues K192, D194, and E195 each coordinate Mg(2+). At K192 the chain carries N6-carboxylysine. Catalysis depends on H285, which acts as the Proton acceptor. 3 residues coordinate substrate: R286, H318, and S370.

This sequence belongs to the RuBisCO large chain family. Type I subfamily. In terms of assembly, heterohexadecamer of 8 large chains and 8 small chains; disulfide-linked. The disulfide link is formed within the large subunit homodimers. It depends on Mg(2+) as a cofactor. Post-translationally, the disulfide bond which can form in the large chain dimeric partners within the hexadecamer appears to be associated with oxidative stress and protein turnover.

It localises to the plastid. It is found in the chloroplast. It catalyses the reaction 2 (2R)-3-phosphoglycerate + 2 H(+) = D-ribulose 1,5-bisphosphate + CO2 + H2O. The enzyme catalyses D-ribulose 1,5-bisphosphate + O2 = 2-phosphoglycolate + (2R)-3-phosphoglycerate + 2 H(+). RuBisCO catalyzes two reactions: the carboxylation of D-ribulose 1,5-bisphosphate, the primary event in carbon dioxide fixation, as well as the oxidative fragmentation of the pentose substrate in the photorespiration process. Both reactions occur simultaneously and in competition at the same active site. This is Ribulose bisphosphate carboxylase large chain from Silene gallica (Common catchfly).